The following is a 472-amino-acid chain: Methanethiol oxidase (472 aa).

N-acetylalanine is present on A2. S111 and S467 each carry phosphoserine.

This sequence belongs to the selenium-binding protein family. As to quaternary structure, interacts with USP33. In terms of processing, the N-terminus is blocked. In terms of tissue distribution, present in liver and colon (at protein level).

It localises to the nucleus. It is found in the cytoplasm. Its subcellular location is the cytosol. The protein resides in the membrane. It carries out the reaction methanethiol + O2 + H2O = hydrogen sulfide + formaldehyde + H2O2 + H(+). It participates in organosulfur degradation. Functionally, catalyzes the oxidation of methanethiol, an organosulfur compound known to be produced in substantial amounts by gut bacteria. Selenium-binding protein which may be involved in the sensing of reactive xenobiotics in the cytoplasm. May be involved in intra-Golgi protein transport. This Rattus norvegicus (Rat) protein is Methanethiol oxidase (Selenbp1).